The chain runs to 290 residues: MRQPPDGEGSVQVEMDPALHIETAKVFAIYGKGGIGKSTTSSNLSAAFSKLGKRVVQIGCDPKHDSTFTLTKRLVPTVIDVLQAVHFHTEELRVEDFVYEGYNGVMCVEAGGPPAGTGCGGYVVGQTVKLLKEHHILEDADVVVFDVLGDVVCGGFATPLQHAERALVVAANDFDSIFAANRIAAAIQAKAKNYDVRLGGIIANRSVATDQIERFNARSGMRTLAHFPDLDVIRRSRLCKSTLFEMEPSPELAAVQQEYLRLAEALWEGVEPLTATPLIDREIFDLLGFD.

Residues 34–39 (GIGKST) and Lys63 contribute to the ATP site. Ser38 lines the Mg(2+) pocket. 2 residues coordinate [4Fe-4S] cluster: Cys119 and Cys153. ATP contacts are provided by residues 204-205 (NR) and 228-230 (PDL).

Belongs to the NifH/BchL/ChlL family. In terms of assembly, homodimer. Protochlorophyllide reductase is composed of three subunits; BchL, BchN and BchB. [4Fe-4S] cluster is required as a cofactor.

It catalyses the reaction chlorophyllide a + oxidized 2[4Fe-4S]-[ferredoxin] + 2 ADP + 2 phosphate = protochlorophyllide a + reduced 2[4Fe-4S]-[ferredoxin] + 2 ATP + 2 H2O. The protein operates within porphyrin-containing compound metabolism; bacteriochlorophyll biosynthesis (light-independent). Component of the dark-operative protochlorophyllide reductase (DPOR) that uses Mg-ATP and reduced ferredoxin to reduce ring D of protochlorophyllide (Pchlide) to form chlorophyllide a (Chlide). This reaction is light-independent. The L component serves as a unique electron donor to the NB-component of the complex, and binds Mg-ATP. The polypeptide is Light-independent protochlorophyllide reductase iron-sulfur ATP-binding protein (Rhodospirillum rubrum).